A 484-amino-acid polypeptide reads, in one-letter code: Ribosomal RNA small subunit methyltransferase F (484 aa).

S-adenosyl-L-methionine contacts are provided by residues 126–132, glutamate 150, aspartate 177, and aspartate 195; that span reads AAAPGSK. Cysteine 248 (nucleophile) is an active-site residue.

It belongs to the class I-like SAM-binding methyltransferase superfamily. RsmB/NOP family.

The protein localises to the cytoplasm. It catalyses the reaction cytidine(1407) in 16S rRNA + S-adenosyl-L-methionine = 5-methylcytidine(1407) in 16S rRNA + S-adenosyl-L-homocysteine + H(+). Its function is as follows. Specifically methylates the cytosine at position 1407 (m5C1407) of 16S rRNA. In Pectobacterium atrosepticum (strain SCRI 1043 / ATCC BAA-672) (Erwinia carotovora subsp. atroseptica), this protein is Ribosomal RNA small subunit methyltransferase F.